Reading from the N-terminus, the 1140-residue chain is Receptor-type guanylate cyclase gcy-3 (1140 aa).

The signal sequence occupies residues 1–21; it reads MKNVFQLLIPLFFHLFSLVSL. Residues 22–495 lie on the Extracellular side of the membrane; the sequence is QNIPVSTGTT…CPLPFWEQYG (474 aa). N-linked (GlcNAc...) asparagine glycosylation is found at Asn-220, Asn-301, Asn-349, Asn-385, Asn-418, Asn-441, and Asn-459. A helical membrane pass occupies residues 496 to 516; it reads ILIFVGAGVFLIMITTNLICF. Residues 517 to 1140 are Cytoplasmic-facing; the sequence is LFMIKNRREE…RQYKMDTLKI (624 aa). Residues 538 to 826 form the Protein kinase domain; the sequence is FVKLRELERK…NICEQLRDLM (289 aa). ATP is bound by residues 544 to 552 and Lys-582; that span reads LERKSKGTS. The Guanylate cyclase domain occupies 897-1027; that stretch reads TVFFSDVVKF…DTVNTASRME (131 aa). The disordered stretch occupies residues 1083-1140; that stretch reads PSISNRSTPPVTQERFTVRAPDTPEARSVSSHGSRPSSNHNNNNDPLYRQYKMDTLKI. The span at 1084-1097 shows a compositional bias: polar residues; sequence SISNRSTPPVTQER. A compositionally biased stretch (low complexity) spans 1109-1126; sequence RSVSSHGSRPSSNHNNNN.

Belongs to the adenylyl cyclase class-4/guanylyl cyclase family. Expressed asymmetrically in ASE right (ASER) sensory neuron and bilaterally in ASI sensory neurons. Expressed in PVT interneuron.

The protein localises to the cell membrane. The catalysed reaction is GTP = 3',5'-cyclic GMP + diphosphate. Functionally, guanylate cyclase involved in the production of the second messenger cGMP. This is Receptor-type guanylate cyclase gcy-3 from Caenorhabditis elegans.